Reading from the N-terminus, the 1464-residue chain is DNA-directed RNA polymerase subunit beta' (1464 aa).

The Zn(2+) site is built by C66, C68, C96, and C99. Mg(2+) is bound by residues D491, D493, and D495. Zn(2+) contacts are provided by C838, C912, C919, and C922. Positions 1143 to 1200 (NDDDDDDYYDSDYYDYYDYSDDDDDYDDYDDYYYNYDDDENDNDNDYDYDYDYDYDYD) are enriched in acidic residues. A disordered region spans residues 1143 to 1229 (NDDDDDDYYD…YDYDYDSDSD (87 aa)). The span at 1204 to 1219 (HNSYSHNSYSPSSNDN) shows a compositional bias: low complexity. Over residues 1220 to 1229 (YDYDYDSDSD) the composition is skewed to acidic residues.

This sequence belongs to the RNA polymerase beta' chain family. In terms of assembly, the RNAP catalytic core consists of 2 alpha, 1 beta, 1 beta' and 1 omega subunit. When a sigma factor is associated with the core the holoenzyme is formed, which can initiate transcription. It depends on Mg(2+) as a cofactor. Requires Zn(2+) as cofactor.

The catalysed reaction is RNA(n) + a ribonucleoside 5'-triphosphate = RNA(n+1) + diphosphate. DNA-dependent RNA polymerase catalyzes the transcription of DNA into RNA using the four ribonucleoside triphosphates as substrates. This chain is DNA-directed RNA polymerase subunit beta', found in Karelsulcia muelleri (strain GWSS) (Sulcia muelleri).